We begin with the raw amino-acid sequence, 145 residues long: Bacilliredoxin GK2368 (145 aa).

Belongs to the bacilliredoxin family.

The sequence is that of Bacilliredoxin GK2368 from Geobacillus kaustophilus (strain HTA426).